A 338-amino-acid polypeptide reads, in one-letter code: (-)-alpha-amorphene synthase ((2E,6E)-farnesyl diphosphate cyclizing) (338 aa).

Residues aspartate 105 and glutamate 109 each contribute to the Mg(2+) site. The short motif at 105–109 (DDRAE) is the DDXXE motif element. Position 196 (arginine 196) interacts with substrate. Serine 246 serves as a coordination point for Mg(2+). Lysine 249 contributes to the substrate binding site. A Mg(2+)-binding site is contributed by glutamate 250. 327-328 (RY) contacts substrate.

This sequence belongs to the terpene synthase family. Mg(2+) serves as cofactor.

It carries out the reaction (2E,6E)-farnesyl diphosphate = (-)-alpha-amorphene + diphosphate. The protein operates within secondary metabolite biosynthesis; terpenoid biosynthesis. Catalyzes the conversion of (2E,6E)-farnesyl diphosphate (FPP) to yield the bicyclic sesquiterpene (1R,6S,7S)-(-)-alpha-amorphene via a probable 1,6-cyclization, which could involve the abstraction of the pyrophosphate from FPP to yield a (R)-bisabolyl cation. The only accepted substrate is (2E,6E)-farnesyl diphosphate (FPP). The chain is (-)-alpha-amorphene synthase ((2E,6E)-farnesyl diphosphate cyclizing) from Streptomyces viridochromogenes (strain DSM 40736 / JCM 4977 / BCRC 1201 / Tue 494).